Consider the following 224-residue polypeptide: Germin-like protein 8-9 (224 aa).

The first 22 residues, 1–22 (MASPSFCLFAALLALVSWQAIA), serve as a signal peptide directing secretion. A disulfide bridge links Cys32 with Cys47. The region spanning 62-212 (AMLDTPRKTN…AFQVGKGTID (151 aa)) is the Cupin type-1 domain. Asn76 is a glycosylation site (N-linked (GlcNAc...) asparagine). Residues His109, His111, and Glu116 each contribute to the Mn(2+) site. Asn135 carries an N-linked (GlcNAc...) asparagine glycan. Residue His157 participates in Mn(2+) binding.

This sequence belongs to the germin family. In terms of assembly, oligomer (believed to be a pentamer but probably hexamer).

It is found in the secreted. Its subcellular location is the extracellular space. The protein localises to the apoplast. In terms of biological role, plays a role in broad-spectrum disease resistance. Probably has no oxalate oxidase activity even if the active site is conserved. The chain is Germin-like protein 8-9 from Oryza sativa subsp. japonica (Rice).